We begin with the raw amino-acid sequence, 281 residues long: N-acetyltransferase ECO1 (281 aa).

Residues 33–57 (VKCDKCEMSYSSTSIEDRAIHEKYH) form a CCHH-type zinc finger. Residues 86–105 (LSRSTGTITPLNSSPLKKSS) are disordered. Over residues 95 to 105 (PLNSSPLKKSS) the composition is skewed to low complexity. Position 223 is an N6-acetyllysine; by autocatalysis (K223).

The protein belongs to the acetyltransferase family. ECO subfamily. In terms of assembly, binds specifically to CHL12, RFC1, RFC2, RFC3, RFC4, RFC5 and RAD24 when members of an RFC complex. Interacts with CHL1 and MPS3. Post-translationally, autoacetylates in vitro.

It is found in the nucleus. Required for establishment of sister chromatid cohesion during S phase but not for its further maintenance during G2 or M phases or for loading the cohesin complex onto DNA. Interacts with the three known alternate replication factor C (RFC) complexes, suggesting that these complexes have essential but redundant activity in cohesion establishment. Acts by acetylating the cohesin complex component SMC3. In vitro, possesses acetyltransferase activity where it can acetylate itself and components of the cohesin complex (MCD1, IRR1 and PDS5), but is unable to acetylate histones. The chain is N-acetyltransferase ECO1 (ECO1) from Saccharomyces cerevisiae (strain ATCC 204508 / S288c) (Baker's yeast).